The sequence spans 626 residues: Probable potassium transport system protein Kup (626 aa).

12 helical membrane passes run 13-33, 53-73, 102-122, 138-158, 169-189, 207-227, 248-268, 277-297, 338-358, 367-387, 399-419, and 421-441; these read VALMMGALGVVYGDIGTSPLY, VLSILFWLLMVVVSFKYVLLI, FFVVLGIFGAALFYGDSMITP, HTLDPWIVPLALLVLLALFAI, LFGPVMVVWFATLGVLGGWQV, FVFEFPVMSFLLLGAVVLALT, WFSMVLPSLTLCYLGQGALLL, PFFLMAPEWGLAALVGLATVA, IYLPQVNALLLCAVLVLVITF, AYGFAVTGTMLMTSILAFAVL, WMLVLGVLLIIDVLLFSANIF, and IHEGGWMPLLVGVVVFTLMMT.

The protein belongs to the HAK/KUP transporter (TC 2.A.72) family.

The protein resides in the cell inner membrane. The catalysed reaction is K(+)(in) + H(+)(in) = K(+)(out) + H(+)(out). Functionally, transport of potassium into the cell. Likely operates as a K(+):H(+) symporter. The chain is Probable potassium transport system protein Kup from Bordetella avium (strain 197N).